Here is a 439-residue protein sequence, read N- to C-terminus: Probable guanine deaminase (439 aa).

Zn(2+)-binding residues include H76 and H78. Substrate-binding positions include 78–81, 203–204, 231–234, and D321; these read HYPQ, RF, and HINE. Positions 231 and 321 each coordinate Zn(2+).

This sequence belongs to the metallo-dependent hydrolases superfamily. ATZ/TRZ family. Zn(2+) serves as cofactor.

It catalyses the reaction guanine + H2O + H(+) = xanthine + NH4(+). It functions in the pathway purine metabolism; guanine degradation; xanthine from guanine: step 1/1. Catalyzes the hydrolytic deamination of guanine, producing xanthine and ammonia. This Deinococcus radiodurans (strain ATCC 13939 / DSM 20539 / JCM 16871 / CCUG 27074 / LMG 4051 / NBRC 15346 / NCIMB 9279 / VKM B-1422 / R1) protein is Probable guanine deaminase (guaD).